We begin with the raw amino-acid sequence, 586 residues long: Eukaryotic translation initiation factor 3 subunit D (586 aa).

The tract at residues 102–176 is disordered; the sequence is SAKRTFGRGG…DKPQRTREPS (75 aa). A compositionally biased stretch (basic and acidic residues) spans 162–174; it reads GWKDYDKPQRTRE. The RNA gate stretch occupies residues 301-315; it reads SLDLVTVNENAADAP. A disordered region spans residues 567–586; sequence EEEEEVAAEEQEAAEEEAEE.

The protein belongs to the eIF-3 subunit D family. In terms of assembly, component of the eukaryotic translation initiation factor 3 (eIF-3) complex.

It localises to the cytoplasm. Functionally, mRNA cap-binding component of the eukaryotic translation initiation factor 3 (eIF-3) complex, which is involved in protein synthesis of a specialized repertoire of mRNAs and, together with other initiation factors, stimulates binding of mRNA and methionyl-tRNAi to the 40S ribosome. The eIF-3 complex specifically targets and initiates translation of a subset of mRNAs involved in cell proliferation. In the eIF-3 complex, eif3d specifically recognizes and binds the 7-methylguanosine cap of a subset of mRNAs. This chain is Eukaryotic translation initiation factor 3 subunit D, found in Aspergillus niger (strain ATCC MYA-4892 / CBS 513.88 / FGSC A1513).